Consider the following 96-residue polypeptide: Putative pterin-4-alpha-carbinolamine dehydratase (96 aa).

This sequence belongs to the pterin-4-alpha-carbinolamine dehydratase family.

It carries out the reaction (4aS,6R)-4a-hydroxy-L-erythro-5,6,7,8-tetrahydrobiopterin = (6R)-L-erythro-6,7-dihydrobiopterin + H2O. The chain is Putative pterin-4-alpha-carbinolamine dehydratase from Prochlorococcus marinus (strain MIT 9301).